Consider the following 522-residue polypeptide: Putative ribose/galactose/methyl galactoside import ATP-binding protein (522 aa).

ABC transporter domains are found at residues 7–244 and 254–498; these read LEMV…VGRE and PKLG…TGQA. Position 39–46 (39–46) interacts with ATP; the sequence is GENGAGKS.

It belongs to the ABC transporter superfamily. Carbohydrate importer 2 (CUT2) (TC 3.A.1.2) family.

The protein localises to the cell membrane. It carries out the reaction D-ribose(out) + ATP + H2O = D-ribose(in) + ADP + phosphate + H(+). The enzyme catalyses D-galactose(out) + ATP + H2O = D-galactose(in) + ADP + phosphate + H(+). Its function is as follows. Part of an ABC transporter complex involved in carbohydrate import. Could be involved in ribose, galactose and/or methyl galactoside import. Responsible for energy coupling to the transport system. This Halalkalibacterium halodurans (strain ATCC BAA-125 / DSM 18197 / FERM 7344 / JCM 9153 / C-125) (Bacillus halodurans) protein is Putative ribose/galactose/methyl galactoside import ATP-binding protein.